Reading from the N-terminus, the 156-residue chain is Putative pre-16S rRNA nuclease (156 aa).

It belongs to the YqgF nuclease family.

Its subcellular location is the cytoplasm. Could be a nuclease involved in processing of the 5'-end of pre-16S rRNA. The polypeptide is Putative pre-16S rRNA nuclease (Bartonella tribocorum (strain CIP 105476 / IBS 506)).